The chain runs to 924 residues: MVSRMGWGGRRRRLGRWGDLGPGSVPLLPMPLPPPPPPSCRGPGGGRISIFSLSPAPHTRSSPSSFSPPTAGPPCSVLQGTGASQSCHSALPIPATPPTQAQPAMTPASASPSWGSHSTPPLAPATPTPSQQCPQDSPGLRVGPLIPEQDYERLEDCDPEGSQDSPIHGEEQQPLLHVPEGLRGSWHHIQNLDSFFTKIYSYHQRNGFACILLEDVFQLGQFIFIVTFTTFLLRCVDYNVLFANQPSNHTRPGPFHSKVTLSDAILPSAQCAERIRSSPLLVLLLVLAAGFWLVQLLRSVCNLFSYWDIQVFYREALHIPPEELSSVPWAEVQSRLLALQRSGGLCVQPRPLTELDIHHRILRYTNYQVALANKGLLPARCPLPWGGSAAFLSRGLALNVDLLLFRGPFSLFRGGWELPHAYKRSDQRGALAARWGRTVLLLAALNLALSPLVLAWQVLHVFYSHVELLRREPGALGARGWSRLARLQLRHFNELPHELRARLARAYRPAAAFLRTAAPPAPLRTLLARQLVFFAGALFAALLVLTVYDEDVLAVEHVLTAMTALGVTATVARSFIPEEQCQGRAPQLLLQTALAHMHYLPEEPGPGGRDRAYRQMAQLLQYRAVSLLEELLSPLLTPLFLLFWFRPRALEIIDFFHHFTVDVAGVGDICSFALMDVKRHGHPQWLSAGQTEASLSQRAEDGKTELSLMRFSLAHPLWRPPGHSSKFLGHLWGRVQQDAAAWGATSARGPSTPGVLSNCTSPLPEAFLANLFVHPLLPPRDLSPTAPCPAAATASLLASISRIAQDPSSVSPGGTGGQKLAQLPELASAEMSLHVIYLHQLHQQQQQQEPWGEAAASILSRPCSSPSQPPSPDEEKPSWSSDGSSPASSPRQQWGTQKARNLFPGGFQVTTDTQKEPDRASCTD.

The segment at 1 to 144 is disordered; that stretch reads MVSRMGWGGR…QDSPGLRVGP (144 aa). The Cytoplasmic segment spans residues 1 to 207; sequence MVSRMGWGGR…KIYSYHQRNG (207 aa). Low complexity predominate over residues 17–27; the sequence is WGDLGPGSVPL. Residues 28–40 show a composition bias toward pro residues; it reads LPMPLPPPPPPSC. Over residues 78-88 the composition is skewed to polar residues; sequence LQGTGASQSCH. A compositionally biased stretch (low complexity) spans 98-113; sequence PTQAQPAMTPASASPS. The Tyrosine-based sorting signal motif lies at 151–154; the sequence is YERL. Residues 208 to 228 form a helical membrane-spanning segment; that stretch reads FACILLEDVFQLGQFIFIVTF. Residues 229–276 are Lumenal-facing; the sequence is TTFLLRCVDYNVLFANQPSNHTRPGPFHSKVTLSDAILPSAQCAERIR. A helical membrane pass occupies residues 277–297; that stretch reads SSPLLVLLLVLAAGFWLVQLL. At 298–438 the chain is on the cytoplasmic side; it reads RSVCNLFSYW…GALAARWGRT (141 aa). Residues 439-459 lie within the membrane without spanning it; sequence VLLLAALNLALSPLVLAWQVL. Residues 460–526 are Cytoplasmic-facing; the sequence is HVFYSHVELL…AAPPAPLRTL (67 aa). The chain crosses the membrane as a helical span at residues 527–547; the sequence is LARQLVFFAGALFAALLVLTV. The Lumenal portion of the chain corresponds to 548-551; it reads YDED. A helical transmembrane segment spans residues 552–572; that stretch reads VLAVEHVLTAMTALGVTATVA. The Cytoplasmic portion of the chain corresponds to 573–624; it reads RSFIPEEQCQGRAPQLLLQTALAHMHYLPEEPGPGGRDRAYRQMAQLLQYRA. An intramembrane segment occupies 625–645; the sequence is VSLLEELLSPLLTPLFLLFWF. Topologically, residues 646–924 are cytoplasmic; that stretch reads RPRALEIIDF…KEPDRASCTD (279 aa). Residues 847 to 924 are disordered; that stretch reads QQEPWGEAAA…KEPDRASCTD (78 aa). A compositionally biased stretch (low complexity) spans 878-890; it reads SWSSDGSSPASSP. Basic and acidic residues predominate over residues 913 to 924; it reads TQKEPDRASCTD.

The protein belongs to the ATG9 family. As to quaternary structure, homotrimer; forms a homotrimer with a central pore that forms a path between the two membrane leaflets. As to expression, highly expressed in placenta (trophoblast cells) and pituitary gland. Not expressed in vascular endothelial.

It is found in the preautophagosomal structure membrane. The enzyme catalyses a 1,2-diacyl-sn-glycero-3-phosphocholine(in) = a 1,2-diacyl-sn-glycero-3-phosphocholine(out). It carries out the reaction a 1,2-diacyl-sn-glycero-3-phospho-L-serine(in) = a 1,2-diacyl-sn-glycero-3-phospho-L-serine(out). The catalysed reaction is a 1,2-diacyl-sn-glycero-3-phosphoethanolamine(in) = a 1,2-diacyl-sn-glycero-3-phosphoethanolamine(out). Functionally, phospholipid scramblase involved in autophagy by mediating autophagosomal membrane expansion. Cycles between the preautophagosomal structure/phagophore assembly site (PAS) and the cytoplasmic vesicle pool and supplies membrane for the growing autophagosome. Lipid scramblase activity plays a key role in preautophagosomal structure/phagophore assembly by distributing the phospholipids that arrive through ATG2 (ATG2A or ATG2B) from the cytoplasmic to the luminal leaflet of the bilayer, thereby driving autophagosomal membrane expansion. In addition to autophagy, also plays a role in necrotic cell death. This chain is Autophagy-related protein 9B (ATG9B), found in Homo sapiens (Human).